Here is an 82-residue protein sequence, read N- to C-terminus: Small ribosomal subunit protein bS18 (82 aa).

The tract at residues 1–20 (MAEVSSSTVRRPFHRRRKTC) is disordered.

Belongs to the bacterial ribosomal protein bS18 family. In terms of assembly, part of the 30S ribosomal subunit. Forms a tight heterodimer with protein bS6.

Functionally, binds as a heterodimer with protein bS6 to the central domain of the 16S rRNA, where it helps stabilize the platform of the 30S subunit. The protein is Small ribosomal subunit protein bS18 of Allorhizobium ampelinum (strain ATCC BAA-846 / DSM 112012 / S4) (Agrobacterium vitis (strain S4)).